Reading from the N-terminus, the 189-residue chain is Leucine repeat adapter protein 25 (189 aa).

Serine 28 is subject to Phosphoserine. The interval 54 to 82 is disordered; that stretch reads ELSRAARAPDGPRHAAGSANSGSAAGPRR. A compositionally biased stretch (low complexity) spans 68-79; that stretch reads AAGSANSGSAAG. One copy of the LRR repeat lies at 86–114; it reads LDSALAALRKEMVGLRQLDMSLLCQLWGL. Positions 136–175 are disordered; it reads SSLHSDSSYPPDAGLSDDEEPPDASLPPDPPPLTVPQTHN. The span at 159–169 shows a compositional bias: pro residues; that stretch reads ASLPPDPPPLT. A Phosphoserine modification is found at serine 188.

The protein belongs to the FAM89 family. Interacts with SKI. Interacts (via LRR repeat) with CDC42BPA (via AGC-kinase C-terminal domain), CDC42BPB (via AGC-kinase C-terminal domain) and LIMK1 (via LIM zinc-binding domains). Forms a tripartite complex with CDC42BPA, CDC42BPB and LIMK1. In terms of assembly, (Microbial infection) Interacts with mouse mammary tumor virus (MMTV) envelope glycoprotein gp70. Widely expressed. Expressed in the early postnatal brain.

The protein localises to the cytoplasm. Its subcellular location is the cell projection. The protein resides in the lamellipodium. It is found in the cell surface. Negatively regulates TGF-beta-induced signaling; in cooperation with SKI prevents the translocation of SMAD2 from the nucleus to the cytoplasm in response to TGF-beta. Acts as an adapter that mediates the specific recognition of LIMK1 by CDC42BPA and CDC42BPB in the lamellipodia. LRAP25-mediated CDC42BPA/CDC42BPB targeting to LIMK1 and the lamellipodium results in LIMK1 activation and the subsequent phosphorylation of CFL1 which is important for lamellipodial F-actin regulation. Functionally, (Microbial infection) May be a receptor for mouse mammary tumor virus (MMTV). The protein is Leucine repeat adapter protein 25 of Mus musculus (Mouse).